The sequence spans 218 residues: Large ribosomal subunit protein uL3 (218 aa).

Belongs to the universal ribosomal protein uL3 family. Part of the 50S ribosomal subunit. Forms a cluster with proteins L14 and L19.

One of the primary rRNA binding proteins, it binds directly near the 3'-end of the 23S rRNA, where it nucleates assembly of the 50S subunit. This chain is Large ribosomal subunit protein uL3, found in Corynebacterium urealyticum (strain ATCC 43042 / DSM 7109).